We begin with the raw amino-acid sequence, 328 residues long: MNQVDYLRISLIDRCNFRCQYCMPEGSELNYILKQQLLTDEELLTLVQEVFIPVGFRQFRLTGGEPLLRPHVVDLVGAIASLPQTQDLSMTTNGFLLAPIAQNLYDAGLRRINISLDSLDPHIFDQIIGSHGRPRWQQVWDGIQAAHRVGFDPLKLNVVVIPGVNDHEILDLAALSIDKQWHVRFIEFMPIGNGELFGDRGWVSSAELRQQIRDRWGLTDAQVRGAGPADVFQIPGAKGTLGFISQMSECFCDRCNRMRLSADGWLRPCLLNETGQLDLKTSLRSGVSIHQLREQVRHLLAIKPEINYKGRDSGTTGVYSRTMSQIGG.

One can recognise a Radical SAM core domain in the interval 1–229; sequence MNQVDYLRIS…DAQVRGAGPA (229 aa). A GTP-binding site is contributed by arginine 8. [4Fe-4S] cluster is bound by residues cysteine 15 and cysteine 19. Tyrosine 21 is an S-adenosyl-L-methionine binding site. Cysteine 22 lines the [4Fe-4S] cluster pocket. Arginine 60 serves as a coordination point for GTP. Glycine 64 contributes to the S-adenosyl-L-methionine binding site. Threonine 91 contacts GTP. Serine 115 provides a ligand contact to S-adenosyl-L-methionine. Lysine 155 contacts GTP. Methionine 189 serves as a coordination point for S-adenosyl-L-methionine. Cysteine 252 and cysteine 255 together coordinate [4Fe-4S] cluster. 257-259 contributes to the GTP binding site; the sequence is RMR. Cysteine 269 lines the [4Fe-4S] cluster pocket.

Belongs to the radical SAM superfamily. MoaA family. Monomer and homodimer. Requires [4Fe-4S] cluster as cofactor.

The catalysed reaction is GTP + AH2 + S-adenosyl-L-methionine = (8S)-3',8-cyclo-7,8-dihydroguanosine 5'-triphosphate + 5'-deoxyadenosine + L-methionine + A + H(+). It participates in cofactor biosynthesis; molybdopterin biosynthesis. Its function is as follows. Catalyzes the cyclization of GTP to (8S)-3',8-cyclo-7,8-dihydroguanosine 5'-triphosphate. The chain is GTP 3',8-cyclase from Nostoc sp. (strain PCC 7120 / SAG 25.82 / UTEX 2576).